We begin with the raw amino-acid sequence, 632 residues long: MSASTSTSTAASQDACYISLLGLAEYFRTSQPPNIKKCIQCLQALFTFMPPSKVEARTHLQMGQILMAYTKNIDLARQHLEKAWSISEPLPNFDVKFDTASLLAQLHLQTDRNSHQAKAMLRRAVELSQNNVYWHCKLLLQLSQIHASDREYSLASELLAVGAESADEASATYLKVLFLLSRAMILMIERKTNDVLALLNSAGQIIDNNIPNPHQKEYLKVFFLVLQVCYYLALGQVKTVKPSLKQLQMSIQTIMAPNWPSDETIFGANQLEMFVWLPKEQLYVLVYLVTVSHSMMAGYMDKAQKYTEKALTQIEKLKQQEDKPILSVFKVILLEHIVMCRMVMGNRELAIREIAAARDVCMAAPQRSLLRRHSAQLHCLIGLYSMSTNLFEHAERQFVVCVSETSERDLKLFANLNLAIIYLRTKRDTDLKQILDAVSTENTHTYSSQALMGGFYYVQGLHAFHKNSFHEAKRFLRETLKMANAEDLNRLTSCSLVLLSHVFLSIGNSKESMNMVTPAMQLASKIPDIHVQLWGSAILKDLHRMSKDVQHEKDAYANHVKYSENLIADQRKCVQSAHHELVNWFQGDPPVTSGPPAAPVLLMPESSVTASVPVIASTSAAMQPAGQYGQFY.

TPR repeat units lie at residues 453 to 486 (GGFY…ANAE) and 493 to 526 (SCSL…ASKI).

The protein belongs to the SCC4/mau-2 family. Interacts with Nipped-B to form the cohesin loading complex.

It is found in the nucleus. The protein resides in the nucleoplasm. Functionally, required for association of the cohesin complex with chromatin during interphase. Plays a role in sister chromatid cohesion and normal progression through prometaphase. This is MAU2 chromatid cohesion factor homolog from Drosophila simulans (Fruit fly).